A 560-amino-acid chain; its full sequence is Formate--tetrahydrofolate ligase (560 aa).

Position 69-76 (69-76 (TPAGEGKS)) interacts with ATP.

This sequence belongs to the formate--tetrahydrofolate ligase family.

The enzyme catalyses (6S)-5,6,7,8-tetrahydrofolate + formate + ATP = (6R)-10-formyltetrahydrofolate + ADP + phosphate. It functions in the pathway one-carbon metabolism; tetrahydrofolate interconversion. In Listeria monocytogenes serotype 4b (strain CLIP80459), this protein is Formate--tetrahydrofolate ligase.